Here is a 215-residue protein sequence, read N- to C-terminus: Keratin-associated protein 26-1 (215 aa).

The protein belongs to the PMG family. Interacts with hair keratins.

In the hair cortex, hair keratin intermediate filaments are embedded in an interfilamentous matrix, consisting of hair keratin-associated proteins (KRTAP), which are essential for the formation of a rigid and resistant hair shaft through their extensive disulfide bond cross-linking with abundant cysteine residues of hair keratins. The matrix proteins include the high-sulfur and high-glycine-tyrosine keratins. This is Keratin-associated protein 26-1 from Mus musculus (Mouse).